Consider the following 390-residue polypeptide: NADH-quinone oxidoreductase subunit D (390 aa).

This sequence belongs to the complex I 49 kDa subunit family. As to quaternary structure, NDH-1 is composed of 14 different subunits. Subunits NuoB, C, D, E, F, and G constitute the peripheral sector of the complex.

It is found in the cell membrane. It carries out the reaction a quinone + NADH + 5 H(+)(in) = a quinol + NAD(+) + 4 H(+)(out). Its function is as follows. NDH-1 shuttles electrons from NADH, via FMN and iron-sulfur (Fe-S) centers, to quinones in the respiratory chain. The immediate electron acceptor for the enzyme in this species is believed to be ubiquinone. Couples the redox reaction to proton translocation (for every two electrons transferred, four hydrogen ions are translocated across the cytoplasmic membrane), and thus conserves the redox energy in a proton gradient. In Wolbachia pipientis subsp. Culex pipiens (strain wPip), this protein is NADH-quinone oxidoreductase subunit D.